The following is a 446-amino-acid chain: Exodeoxyribonuclease 7 large subunit (446 aa).

Belongs to the XseA family. Heterooligomer composed of large and small subunits.

It is found in the cytoplasm. It carries out the reaction Exonucleolytic cleavage in either 5'- to 3'- or 3'- to 5'-direction to yield nucleoside 5'-phosphates.. In terms of biological role, bidirectionally degrades single-stranded DNA into large acid-insoluble oligonucleotides, which are then degraded further into small acid-soluble oligonucleotides. In Xanthomonas campestris pv. campestris (strain 8004), this protein is Exodeoxyribonuclease 7 large subunit.